The chain runs to 222 residues: Flagellin B5 (222 aa).

The propeptide occupies 1-4 (MRRG).

The protein belongs to the archaeal flagellin family.

The protein resides in the archaeal flagellum. Its function is as follows. Flagellin is the subunit protein which polymerizes to form the filaments of archaeal flagella. This is Flagellin B5 (flaB5) from Pyrococcus abyssi (strain GE5 / Orsay).